Here is a 270-residue protein sequence, read N- to C-terminus: MSDLHNESIFITGGGSGLGLALVERFIEEGAQVATLELSAAKVASLRQRFGEHILAVEGNVTCYADYQRAVNQILTRSGKLDCFIGNAGIWDHNASLVNTPAETLETGFHELFNVNVLGYLLGAKACAPALIASEGSMIFTLSNAAWYPGGGGPLYTASKHAATGLIRQLAYELAPKVRVNGVGPCGMASDLRGPQALGQSETSIMQSLTPEKIAAILPLQFFPQPADFTGPYVMLASRRNNRALSGVMINADAGLAIRGIRHVAAGLDL.

NAD(+) is bound at residue 10 to 34 (FITGGGSGLGLALVERFIEEGAQVA). Ser-143 provides a ligand contact to substrate. The active-site Proton acceptor is the Tyr-156.

Belongs to the short-chain dehydrogenases/reductases (SDR) family.

It carries out the reaction 3-(cis-5,6-dihydroxycyclohexa-1,3-dien-1-yl)propanoate + NAD(+) = 3-(2,3-dihydroxyphenyl)propanoate + NADH + H(+). The enzyme catalyses (2E)-3-(cis-5,6-dihydroxycyclohexa-1,3-dien-1-yl)prop-2-enoate + NAD(+) = (2E)-3-(2,3-dihydroxyphenyl)prop-2-enoate + NADH + H(+). It participates in aromatic compound metabolism; 3-phenylpropanoate degradation. In terms of biological role, converts 3-phenylpropionate-dihydrodiol (PP-dihydrodiol) and cinnamic acid-dihydrodiol (CI-dihydrodiol) into 3-(2,3-dihydroxylphenyl)propanoic acid (DHPP) and 2,3-dihydroxicinnamic acid (DHCI), respectively. The chain is 3-phenylpropionate-dihydrodiol/cinnamic acid-dihydrodiol dehydrogenase from Escherichia coli O17:K52:H18 (strain UMN026 / ExPEC).